The following is a 160-amino-acid chain: Protein CrtK (160 aa).

5 helical membrane passes run Leu-3 to Phe-23, Trp-37 to Ile-57, Leu-76 to Leu-96, Gly-101 to Trp-121, and Leu-129 to Trp-149.

The protein belongs to the TspO/BZRP family.

The protein resides in the cell inner membrane. It participates in carotenoid biosynthesis; spheroidene biosynthesis. The sequence is that of Protein CrtK (crtK) from Rhodobacter capsulatus (strain ATCC BAA-309 / NBRC 16581 / SB1003).